The chain runs to 293 residues: uncharacterized protein (293 aa).

Residues 65 to 89 adopt a coiled-coil conformation; that stretch reads LQKYLENIKNKKLNLNKQSNNQTNN. Residues 81 to 112 are disordered; the sequence is KQSNNQTNNQTNNQTNNQTNNQTNNIRPQINN.

Its subcellular location is the virion. This is an uncharacterized protein from Acanthamoeba polyphaga mimivirus (APMV).